The sequence spans 237 residues: MTRKVSRRLQELQKKVEDRAYEPLAALNLLKETATAKFPESAEAHIRLGIDPKYTDQQLRTTVALPKGTGQTIRVAVIARGEKVAEAKAAGADIAGSEELIEEISKGFLDFDLLIATPDVMPQVAKLGRQLGPRGLMPSPKGGTVTFDLEQAINEFKAGKLEFRADRTGIVHVLFGKASFSADDLLANLKALQETIDRNRPSGAKGRYWRSVYISATMGPAIEVDINALRDLKLAEA.

Belongs to the universal ribosomal protein uL1 family. Part of the 50S ribosomal subunit.

Binds directly to 23S rRNA. The L1 stalk is quite mobile in the ribosome, and is involved in E site tRNA release. Functionally, protein L1 is also a translational repressor protein, it controls the translation of the L11 operon by binding to its mRNA. This chain is Large ribosomal subunit protein uL1, found in Synechococcus elongatus (strain ATCC 33912 / PCC 7942 / FACHB-805) (Anacystis nidulans R2).